Consider the following 332-residue polypeptide: Transaldolase (332 aa).

The Schiff-base intermediate with substrate role is filled by lysine 136.

Belongs to the transaldolase family. Type 1 subfamily.

It localises to the cytoplasm. It catalyses the reaction D-sedoheptulose 7-phosphate + D-glyceraldehyde 3-phosphate = D-erythrose 4-phosphate + beta-D-fructose 6-phosphate. The protein operates within carbohydrate degradation; pentose phosphate pathway; D-glyceraldehyde 3-phosphate and beta-D-fructose 6-phosphate from D-ribose 5-phosphate and D-xylulose 5-phosphate (non-oxidative stage): step 2/3. Transaldolase is important for the balance of metabolites in the pentose-phosphate pathway. In Nostoc sp. (strain PCC 7120 / SAG 25.82 / UTEX 2576), this protein is Transaldolase.